The sequence spans 1669 residues: Collagen alpha-1(IV) chain (1669 aa).

The first 27 residues, 1–27, serve as a signal peptide directing secretion; it reads MGPRLSVWLLLLFAALLLHEERSRAAA. Residues 28 to 172 constitute a propeptide, N-terminal propeptide (7S domain); that stretch reads KGDCGGSGCG…LGHVPGTLLK (145 aa). A disordered region spans residues 47–1443; that stretch reads QKGERGLPGL…MGPPGTPSVD (1397 aa). Over residues 92 to 104 the composition is skewed to low complexity; the sequence is TRGPPGAAGYPGN. An N-linked (GlcNAc...) asparagine glycan is attached at Asn126. The tract at residues 173 to 1440 is triple-helical region; it reads GERGFPGIPG…PGSMGPPGTP (1268 aa). A compositionally biased stretch (pro residues) spans 196 to 214; sequence VGPPGFTGPPGPPGPPGPP. 3-hydroxyproline is present on residues Pro204, Pro207, and Pro210. Residues 234-247 are compositionally biased toward low complexity; it reads QGVSGPPGVPGQAQ. The span at 289-298 shows a compositional bias: basic and acidic residues; the sequence is PGKDGEKGER. Residues 367–376 show a composition bias toward pro residues; the sequence is PGQPGPPGFP. A compositionally biased stretch (low complexity) spans 377 to 387; that stretch reads TPGQAGAPGFP. Pro residues-rich tracts occupy residues 413 to 424 and 436 to 448; these read PGPPGPPGPPGQ and PGPPGDQGPPGTP. The span at 485–494 shows a compositional bias: low complexity; sequence PGEIGFPGQP. Basic and acidic residues-rich tracts occupy residues 497-508 and 535-545; these read KGDRGLPGRDGL and FDMRLKGDKGD. The segment covering 586–595 has biased composition (gly residues); the sequence is GPPGGVGFPG. 3-hydroxyproline is present on residues Pro587 and Pro602. Pro603 bears the 4-hydroxyproline mark. Pro605 carries the post-translational modification 3-hydroxyproline. Pro606 carries the 4-hydroxyproline modification. Low complexity predominate over residues 611-620; it reads IGPVGEKGQA. The span at 621-630 shows a compositional bias: gly residues; it reads GFPGGPGSPG. Residues Pro623, Pro626, Pro629, and Pro632 each carry the 4-hydroxyproline modification. Pro647 carries the post-translational modification 3-hydroxyproline. Over residues 715–731 the composition is skewed to low complexity; the sequence is RPGFNGLPGNPGPQGQK. A compositionally biased stretch (gly residues) spans 758 to 767; the sequence is GSIGGPGVPG. Pro residues predominate over residues 784–802; that stretch reads PGPPGVQGPAGPPGVPGIG. Positions 803–817 are enriched in gly residues; that stretch reads PPGAMGPPGGQGPPG. Low complexity-rich tracts occupy residues 847–875 and 994–1003; these read SQGLPGLTGQSGLPGLPGQQGTPGVPGFP and DPGLSGTPGS. The span at 1011-1020 shows a compositional bias: gly residues; that stretch reads GSVGGMGLPG. Pro1214 bears the 3-hydroxyproline mark. A compositionally biased stretch (low complexity) spans 1220–1230; sequence QPGLPGTPGHP. Residues 1247–1258 are compositionally biased toward pro residues; the sequence is PGHPGPMGPPGF. Residues 1290–1299 are compositionally biased toward gly residues; sequence GMPGIGGSPG. 3 stretches are compositionally biased toward low complexity: residues 1333–1343, 1368–1391, and 1398–1412; these read DQGVPGPKGLQ, PGLKGLQGPPGPKGQQGVTGSVGL, and PGFDGAPGQKGETGP. The span at 1413–1428 shows a compositional bias: pro residues; the sequence is FGPPGPRGFPGPPGPD. Pro1424 carries the 3-hydroxyproline modification. The region spanning 1445–1669 is the Collagen IV NC1 domain; that stretch reads GFLVTRHSQT…SRCQVCMRRT (225 aa). 6 disulfide bridges follow: Cys1460-Cys1551, Cys1493-Cys1548, Cys1505-Cys1511, Cys1570-Cys1665, Cys1604-Cys1662, and Cys1616-Cys1622. Residue Met1533 forms an S-Lysyl-methionine sulfilimine (Met-Lys) (interchain with K-1651) linkage. An S-Lysyl-methionine sulfilimine (Lys-Met) (interchain with M-1533) cross-link involves residue Lys1651.

The protein belongs to the type IV collagen family. There are six type IV collagen isoforms, alpha 1(IV)-alpha 6(IV), each of which can form a triple helix structure with 2 other chains to generate type IV collagen network. Interacts with EFEMP2. Lysines at the third position of the tripeptide repeating unit (G-X-Y) are hydroxylated. The modified lysines can be O-glycosylated. Post-translationally, contains 4-hydroxyproline. Prolines at the third position of the tripeptide repeating unit (G-X-Y) are hydroxylated in some or all of the chains. In terms of processing, contains 3-hydroxyproline. This modification occurs on the first proline residue in the sequence motif Gly-Pro-Hyp, where Hyp is 4-hydroxyproline. Type IV collagens contain numerous cysteine residues which are involved in inter- and intramolecular disulfide bonding. 12 of these, located in the NC1 domain, are conserved in all known type IV collagens. Post-translationally, the trimeric structure of the NC1 domains is stabilized by covalent bonds (sulfilimine cross-links) between Lys and Met residues. These cross-links are important for the mechanical stability of the basement membrane. Sulfilimine cross-link is catalyzed by PXDN. In terms of processing, proteolytic processing produces the C-terminal NC1 peptide, arresten. As to expression, detected in the basement membrane of the cornea (at protein level).

The protein resides in the secreted. The protein localises to the extracellular space. It localises to the extracellular matrix. It is found in the basement membrane. In terms of biological role, type IV collagen is the major structural component of glomerular basement membranes (GBM), forming a 'chicken-wire' meshwork together with laminins, proteoglycans and entactin/nidogen. Functionally, arresten, comprising the C-terminal NC1 domain, inhibits angiogenesis and tumor formation. The C-terminal half is found to possess the anti-angiogenic activity. Specifically inhibits endothelial cell proliferation, migration and tube formation. The protein is Collagen alpha-1(IV) chain of Mus musculus (Mouse).